A 388-amino-acid chain; its full sequence is Chorismate synthase (388 aa).

2 residues coordinate NADP(+): Arg39 and Arg45. Positions 95–118 are disordered; that stretch reads EKNEKSRRVSRPRPGHADLVGGMK. Residues 130–132, 251–252, Gly296, 311–315, and Arg337 contribute to the FMN site; these read RSS, NA, and KPIPT.

This sequence belongs to the chorismate synthase family. In terms of assembly, homotetramer. Requires FMNH2 as cofactor.

The enzyme catalyses 5-O-(1-carboxyvinyl)-3-phosphoshikimate = chorismate + phosphate. The protein operates within metabolic intermediate biosynthesis; chorismate biosynthesis; chorismate from D-erythrose 4-phosphate and phosphoenolpyruvate: step 7/7. Functionally, catalyzes the anti-1,4-elimination of the C-3 phosphate and the C-6 proR hydrogen from 5-enolpyruvylshikimate-3-phosphate (EPSP) to yield chorismate, which is the branch point compound that serves as the starting substrate for the three terminal pathways of aromatic amino acid biosynthesis. This reaction introduces a second double bond into the aromatic ring system. This is Chorismate synthase from Listeria monocytogenes serotype 4b (strain CLIP80459).